The primary structure comprises 292 residues: RNA polymerase II transcriptional coactivator SUB1 (292 aa).

Disordered regions lie at residues 1–31 (MSYYNRYRNKRRSDNGGGNLSNSNNNNGGMP) and 117–292 (LLSD…SEEE). Residues 20-31 (LSNSNNNNGGMP) show a composition bias toward low complexity. Serine 119 bears the Phosphoserine mark. Basic and acidic residues-rich tracts occupy residues 133 to 166 (NNDKDKNGKDKNSPKKRREDKSKASNESHDLEPR), 179 to 191 (PHEENIQNAEREA), 204 to 240 (KQQEERKQKEKEEAEEAKAKAVAEQEKEAKAKEKIAE), and 251 to 267 (AKKEDIVSNINESKDAN). Phosphoserine occurs at positions 268, 269, and 289.

This sequence belongs to the transcriptional coactivator PC4 family.

It is found in the nucleus. In terms of biological role, plays a role in the release of TFIIB from the transcription complex during transcription initiation. Binds to TFIIB and specifically inhibits the formation of the TBP-TFIIB-promoter complexes. The chain is RNA polymerase II transcriptional coactivator SUB1 (SUB1) from Saccharomyces cerevisiae (strain ATCC 204508 / S288c) (Baker's yeast).